We begin with the raw amino-acid sequence, 396 residues long: uncharacterized protein (396 aa).

This is an uncharacterized protein from Pseudomonas amyloderamosa.